The following is a 312-amino-acid chain: Pimeloyl-[acyl-carrier protein] methyl ester esterase (312 aa).

The AB hydrolase-1 domain occupies 17-241; sequence VYLIHGWGAN…KAAHAPFLSH (225 aa). Substrate-binding positions include Trp23, 83 to 84, and 145 to 149; these read SL and FLQLQ. Residue Ser83 is the Nucleophile of the active site. Residues Asp207 and His235 contribute to the active site. Substrate is bound at residue His235.

It belongs to the AB hydrolase superfamily. Carboxylesterase BioH family. Monomer.

It is found in the cytoplasm. The catalysed reaction is 6-carboxyhexanoyl-[ACP] methyl ester + H2O = 6-carboxyhexanoyl-[ACP] + methanol + H(+). Its pathway is cofactor biosynthesis; biotin biosynthesis. Its function is as follows. The physiological role of BioH is to remove the methyl group introduced by BioC when the pimeloyl moiety is complete. It allows to synthesize pimeloyl-ACP via the fatty acid synthetic pathway through the hydrolysis of the ester bonds of pimeloyl-ACP esters. This chain is Pimeloyl-[acyl-carrier protein] methyl ester esterase, found in Neisseria meningitidis serogroup A / serotype 4A (strain DSM 15465 / Z2491).